Here is a 339-residue protein sequence, read N- to C-terminus: Dihydroorotate dehydrogenase (quinone) (339 aa).

Residues 62–66 (AGLDK) and T86 contribute to the FMN site. A substrate-binding site is contributed by K66. Substrate is bound at residue 111–115 (NRMGF). 2 residues coordinate FMN: N139 and N172. N172 contributes to the substrate binding site. S175 (nucleophile) is an active-site residue. N177 lines the substrate pocket. Residues K217 and T245 each coordinate FMN. 246 to 247 (NT) contributes to the substrate binding site. FMN is bound by residues G268, G297, and 318–319 (YS).

This sequence belongs to the dihydroorotate dehydrogenase family. Type 2 subfamily. As to quaternary structure, monomer. Requires FMN as cofactor.

It is found in the cell membrane. The enzyme catalyses (S)-dihydroorotate + a quinone = orotate + a quinol. The protein operates within pyrimidine metabolism; UMP biosynthesis via de novo pathway; orotate from (S)-dihydroorotate (quinone route): step 1/1. Catalyzes the conversion of dihydroorotate to orotate with quinone as electron acceptor. In Shewanella amazonensis (strain ATCC BAA-1098 / SB2B), this protein is Dihydroorotate dehydrogenase (quinone).